Reading from the N-terminus, the 649-residue chain is tRNA-guanine(15) transglycosylase (649 aa).

Asp-88 acts as the Nucleophile in catalysis. Positions 123 and 194 each coordinate substrate. Zn(2+)-binding residues include Cys-280, Cys-282, and Cys-285. A PUA domain is found at 573 to 648 (KYRIVIDSSV…VAATLRGGLK (76 aa)).

This sequence belongs to the archaeosine tRNA-ribosyltransferase family. It depends on Zn(2+) as a cofactor.

The enzyme catalyses guanosine(15) in tRNA + 7-cyano-7-deazaguanine = 7-cyano-7-carbaguanosine(15) in tRNA + guanine. Its pathway is tRNA modification; archaeosine-tRNA biosynthesis. Its function is as follows. Exchanges the guanine residue with 7-cyano-7-deazaguanine (preQ0) at position 15 in the dihydrouridine loop (D-loop) of archaeal tRNAs. The sequence is that of tRNA-guanine(15) transglycosylase from Methanococcus maripaludis (strain C6 / ATCC BAA-1332).